The chain runs to 500 residues: Metal transporter Nramp3.1 (500 aa).

A run of 12 helical transmembrane segments spans residues 51-71 (LWLFTGPGFLMCIAFLDPGNL), 79-99 (AIAGYSLLWLLLWATAMGLLV), 128-148 (MILWIMAELALIGADIQEVIG), 160-180 (VLPLWAGVIITASDCFIFLFL), 188-208 (LEAAFGILIGIMAVTFAWMFA), 234-254 (AVGVVGCIIMPHNVFLHSALV), 280-300 (AALAISFMINLFVTTIFAKGF), 322-342 (YGGGFFPILYIWGIGLLAAGQ), 370-390 (ALITRSCAIIPTIIVALVFDT), 401-421 (WLNMLQSIQIPFALIPLLCLV), 439-459 (VSWLVAALVMLINGYLLLDFF), and 467-487 (VFTTVVCAFTGAYVTFIIYLI).

Belongs to the NRAMP (TC 2.A.55) family. Expressed in roots, stems, buds and leaves.

The protein localises to the golgi apparatus. Its subcellular location is the trans-Golgi network membrane. The catalysed reaction is Mn(2+)(in) = Mn(2+)(out). The enzyme catalyses Fe(2+)(in) = Fe(2+)(out). In terms of biological role, divalent metal transporter. Can transport manganese (Mn) and iron (Fe). Involved in the control of cell-to-cell transport of manganese (Mn) between organs and tissues to monitor Mn homeostasis. This is Metal transporter Nramp3.1 from Populus trichocarpa (Western balsam poplar).